The primary structure comprises 341 residues: MTSSDPTLRPERLPEDMDRALRPQSLEEFVGQAEARANLRVFIESARMRGEAMDHTLFHGPPGLGKTTLAQIMARELGVGFRMTSGPVLAKPGDLAAILTNLEPRDVLFIDEIHRLSPVVEEVLYPALEDFALDLVIGEGPAARTVRIDLQPFTLVGATTRLGLLTTPLRDRFGIPTRLQFYTEDELDLIVARGARMMGVDSDPEGTREIARRARGTPRIAGRLLRRVVDFALVEGDGRLTQAIADRALTRLGVDHLGLDLGDRRYIGLIAENYGGGPVGIETIAAALSESRDAVEEVIEPYLLQQGLIQRTPRGRMLAHKAWRHMGIEPPKGPGQSDLFG.

A large ATPase domain (RuvB-L) region spans residues 1 to 182; the sequence is MTSSDPTLRP…FGIPTRLQFY (182 aa). Residues L21, R22, G63, K66, T67, T68, 129 to 131, R172, Y182, and R219 contribute to the ATP site; that span reads EDF. T67 is a binding site for Mg(2+). The tract at residues 183–253 is small ATPAse domain (RuvB-S); it reads TEDELDLIVA…IADRALTRLG (71 aa). Positions 256–341 are head domain (RuvB-H); the sequence is HLGLDLGDRR…KGPGQSDLFG (86 aa). Positions 292, 311, and 316 each coordinate DNA.

The protein belongs to the RuvB family. Homohexamer. Forms an RuvA(8)-RuvB(12)-Holliday junction (HJ) complex. HJ DNA is sandwiched between 2 RuvA tetramers; dsDNA enters through RuvA and exits via RuvB. An RuvB hexamer assembles on each DNA strand where it exits the tetramer. Each RuvB hexamer is contacted by two RuvA subunits (via domain III) on 2 adjacent RuvB subunits; this complex drives branch migration. In the full resolvosome a probable DNA-RuvA(4)-RuvB(12)-RuvC(2) complex forms which resolves the HJ.

The protein resides in the cytoplasm. The enzyme catalyses ATP + H2O = ADP + phosphate + H(+). Its function is as follows. The RuvA-RuvB-RuvC complex processes Holliday junction (HJ) DNA during genetic recombination and DNA repair, while the RuvA-RuvB complex plays an important role in the rescue of blocked DNA replication forks via replication fork reversal (RFR). RuvA specifically binds to HJ cruciform DNA, conferring on it an open structure. The RuvB hexamer acts as an ATP-dependent pump, pulling dsDNA into and through the RuvAB complex. RuvB forms 2 homohexamers on either side of HJ DNA bound by 1 or 2 RuvA tetramers; 4 subunits per hexamer contact DNA at a time. Coordinated motions by a converter formed by DNA-disengaged RuvB subunits stimulates ATP hydrolysis and nucleotide exchange. Immobilization of the converter enables RuvB to convert the ATP-contained energy into a lever motion, pulling 2 nucleotides of DNA out of the RuvA tetramer per ATP hydrolyzed, thus driving DNA branch migration. The RuvB motors rotate together with the DNA substrate, which together with the progressing nucleotide cycle form the mechanistic basis for DNA recombination by continuous HJ branch migration. Branch migration allows RuvC to scan DNA until it finds its consensus sequence, where it cleaves and resolves cruciform DNA. This chain is Holliday junction branch migration complex subunit RuvB, found in Cereibacter sphaeroides (strain ATCC 17029 / ATH 2.4.9) (Rhodobacter sphaeroides).